Here is a 215-residue protein sequence, read N- to C-terminus: MSRKDDNQSGEVGRTLVDFMEVAITMIVYLKGFYPSAAFERRRYMNVVVQRARHPELRDYIHSAASGLLPFIEKGLVERVAVVFFSEDNVPVERFIFKITIKPSCAALVEEGQLEFALRSFLIKLSVSKSLVKPLPLNCRWEVTAYLRSLPQVGSSKEAELWIPTDTKQWQNPPVLTPVKSLNSEPLCLQLYLEHPSLSEPLNLVNPEDVAPHDP.

The 184-residue stretch at 10-193 (GEVGRTLVDF…SEPLCLQLYL (184 aa)) folds into the HORMA domain.

The protein belongs to the MAD2 family. In terms of assembly, forms DNA polymerase zeta with REV3.

It localises to the nucleus. Regulatory subunit of the error prone DNA polymerase zeta. Involved in damage-tolerance mechanisms through translesion DNA synthesis. This chain is DNA polymerase zeta processivity subunit (REV7), found in Arabidopsis thaliana (Mouse-ear cress).